The following is a 70-amino-acid chain: Adenylate kinase (70 aa).

An ATP-binding site is contributed by 10–15 (GAGKGT). An NMP region spans residues 30–59 (STGDLFRANISKQTELGKLAKSYMDKGELV). AMP-binding positions include threonine 31, arginine 36, and 57 to 59 (ELV).

It belongs to the adenylate kinase family. Monomer.

It is found in the cytoplasm. It catalyses the reaction AMP + ATP = 2 ADP. Its pathway is purine metabolism; AMP biosynthesis via salvage pathway; AMP from ADP: step 1/1. In terms of biological role, catalyzes the reversible transfer of the terminal phosphate group between ATP and AMP. Plays an important role in cellular energy homeostasis and in adenine nucleotide metabolism. In Streptomyces scabiei, this protein is Adenylate kinase (adk).